The following is a 948-amino-acid chain: ATPase 2, plasma membrane-type (948 aa).

Serine 2 carries the N-acetylserine modification. Topologically, residues serine 2–phenylalanine 61 are cytoplasmic. The helical transmembrane segment at leucine 62 to isoleucine 81 threads the bilayer. Topologically, residues alanine 82–tryptophan 93 are extracellular. A helical transmembrane segment spans residues glutamine 94–glutamate 114. Residues asparagine 115 to isoleucine 243 are Cytoplasmic-facing. A helical membrane pass occupies residues glycine 244–proline 264. Over isoleucine 265–glycine 273 the chain is Extracellular. A helical membrane pass occupies residues isoleucine 274–threonine 291. Residues valine 292–lysine 643 lie on the Cytoplasmic side of the membrane. Aspartate 329 serves as the catalytic 4-aspartylphosphate intermediate. Positions 588 and 592 each coordinate Mg(2+). Residues asparagine 644–leucine 665 form a helical membrane-spanning segment. At isoleucine 666–aspartate 670 the chain is on the extracellular side. A helical membrane pass occupies residues phenylalanine 671–aspartate 693. At arginine 694–isoleucine 709 the chain is on the cytoplasmic side. A helical transmembrane segment spans residues phenylalanine 710–alanine 730. The Extracellular segment spans residues alanine 731–histidine 751. A helical membrane pass occupies residues glutamate 752 to threonine 772. At arginine 773–glycine 784 the chain is on the cytoplasmic side. A helical membrane pass occupies residues alanine 785–alanine 805. Topologically, residues asparagine 806–arginine 813 are extracellular. Residues glycine 814–leucine 834 form a helical membrane-spanning segment. Residues aspartate 835 to valine 948 lie on the Cytoplasmic side of the membrane. Threonine 881 is subject to Phosphothreonine. Serine 899 carries the post-translational modification Phosphoserine. Serine 931 is subject to Phosphoserine; by CIPK11. An interaction with 14-3-3 proteins region spans residues tyrosine 946–valine 948. Position 947 is a phosphothreonine (threonine 947).

It belongs to the cation transport ATPase (P-type) (TC 3.A.3) family. Type IIIA subfamily. As to quaternary structure, binds to 14-3-3 proteins. The binding is induced by phosphorylation of Thr-947 and it activates the H(+)-ATPase. Interacts (via the R-domain) with PSY1R (via C-terminus). Part of a functional complex containing PSKR1, BAK1, CNGC17, and AHA. Interacts with CNGC17 and PSKR1. Interacts with PP2C67/PP2C-D1 at the plasma membrane. Interacts with AHA1. Phosphorylated, probably by PHOT1 and PHOT2, at C-terminal Thr-947 in guard cells in response to blue light to induce stomatal opening. In terms of processing, phosphorylation at Thr-881 by PSY1R. This phosphorylation activates proton pumping. Decreased phosphorylation in response to flg22 elicitation. Post-translationally, phosphorylation at Ser-899 is specifically induced by RALF1, thus leading to the inhibition of proton transport. Increased phosphorylation in response to flg22 elicitation. Phosphorylation of Thr-947 induces the binding to 14-3-3 proteins, but phosphorylation of Ser-931 interferes with this binding no matter whether Thr-947 is phosphorylated or not. Decreased phosphorylation in response to flg22 elicitation. Phosphorylation of Thr-947 is enhanced by the presence of brassinolide (BL) via the BRI1-BIN2 pathway and prior the trigger of hypocotyl elongation. Inactivated by PP2C67/PP2C-D1-mediated Thr-947 dephosphorylation; SAUR19 inhibits the action of PP2C67/PP2C-D1 and thus promotes the active phosphorylated form. In terms of processing, abscisic acid induces dephosphorylation of AHA2 in etiolated seedlings, suppressing ATP hydrolysis and hypocotyl elongation. As to expression, higher levels in roots than in shoots. Expressed in epidermal and root cortex cells, in phloem, xylem and root hairs. Detected in cotyledons, leaves, hypocotyls, roots and root hairs. Expressed in guard cells and mesophyll cells.

Its subcellular location is the cell membrane. The enzyme catalyses ATP + H2O + H(+)(in) = ADP + phosphate + 2 H(+)(out). Its activity is regulated as follows. Regulated by an auto-inhibitory C-terminal domain that can be displaced by phosphorylation of Thr-947 and the subsequent binding of 14-3-3 proteins. Negatively regulated by PKS5. PKS5 phosphorylates Ser-931, inhibiting interaction with the activating 14-3-3 protein. Positively regulated by PSY1R. PSY1R phosphorylates Thr-881, situated in the auto-inhibitory region I of the C-terminal domain, causing pump activation. Negatively regulated by the secreted peptide RALF. After specific binding to FERONIA, RALF causes phosphorylation at Ser-899, mediating the inhibition of proton transport. Activated by lysophospholipids, without the involvement of phosphorylation of Thr-947. This activation is critically dependent on the single autoinhibitory residue Leu-919. Repressed by PP2C-D phosphatases (e.g. PP2C67/PP2C-D1 and PP2C64/PP2C-D5) which dephosphorylates Thr-947. Triggered by SAUR19 via phosphorylation of the C-terminal autoinhibitory domain (e.g. Thr-947), as a result of the inhibition of PP2C67/PP2C-D1. Phosphorylation on Thr residues is repressed by tyrphostin 9, sphingosine, GW5074 and BML-265. By contrast, the fungal phytotoxin fusicoccin (FC) promotes phosphorylation of Thr-947 independently to BHP, thus leading to large stomatal opening. Its function is as follows. The plasma membrane H(+) ATPase of plants and fungi generates a proton gradient that drives the active transport of nutrients by H(+)-symport. The resulting external acidification and/or internal alkinization may mediate growth responses. Involved in maintaining the membrane potential and delta-pH, together forming the plasma membrane protonmotive force (PMF) required for root and hypocotyl elongation and root tropism. Important for root growth and development during different nitrogen regimes. Forms a functional cation-translocating unit with CNGC17 that is activated by PSKR1/BAK1 and possibly other BAK1/RLK complexes. Promotes stomatal opening in response to blue light. The polypeptide is ATPase 2, plasma membrane-type (Arabidopsis thaliana (Mouse-ear cress)).